Consider the following 378-residue polypeptide: Ribosomal RNA large subunit methyltransferase G (378 aa).

This sequence belongs to the methyltransferase superfamily. RlmG family.

Its subcellular location is the cytoplasm. It carries out the reaction guanosine(1835) in 23S rRNA + S-adenosyl-L-methionine = N(2)-methylguanosine(1835) in 23S rRNA + S-adenosyl-L-homocysteine + H(+). Specifically methylates the guanine in position 1835 (m2G1835) of 23S rRNA. This Shigella boydii serotype 18 (strain CDC 3083-94 / BS512) protein is Ribosomal RNA large subunit methyltransferase G.